A 156-amino-acid polypeptide reads, in one-letter code: Small ribosomal subunit protein uS7 (156 aa).

Belongs to the universal ribosomal protein uS7 family. As to quaternary structure, part of the 30S ribosomal subunit. Contacts proteins S9 and S11.

Its function is as follows. One of the primary rRNA binding proteins, it binds directly to 16S rRNA where it nucleates assembly of the head domain of the 30S subunit. Is located at the subunit interface close to the decoding center, probably blocks exit of the E-site tRNA. This chain is Small ribosomal subunit protein uS7, found in Tremblaya princeps.